Here is a 39-residue protein sequence, read N- to C-terminus: Photosystem I reaction center subunit IX (39 aa).

The helical transmembrane segment at 7–27 threads the bilayer; that stretch reads FLTTAPVAFILFSSFVFALFI.

It belongs to the PsaJ family.

It localises to the cellular thylakoid membrane. In terms of biological role, may help in the organization of the PsaE and PsaF subunits. The protein is Photosystem I reaction center subunit IX of Synechococcus sp. (strain JA-2-3B'a(2-13)) (Cyanobacteria bacterium Yellowstone B-Prime).